The following is a 583-amino-acid chain: Isocitrate dehydrogenase kinase/phosphatase (583 aa).

Residues 315-321 and lysine 336 each bind ATP; that span reads APGIRGM. Aspartate 371 is an active-site residue.

The protein belongs to the AceK family.

The protein localises to the cytoplasm. It carries out the reaction L-seryl-[isocitrate dehydrogenase] + ATP = O-phospho-L-seryl-[isocitrate dehydrogenase] + ADP + H(+). Functionally, bifunctional enzyme which can phosphorylate or dephosphorylate isocitrate dehydrogenase (IDH) on a specific serine residue. This is a regulatory mechanism which enables bacteria to bypass the Krebs cycle via the glyoxylate shunt in response to the source of carbon. When bacteria are grown on glucose, IDH is fully active and unphosphorylated, but when grown on acetate or ethanol, the activity of IDH declines drastically concomitant with its phosphorylation. This is Isocitrate dehydrogenase kinase/phosphatase from Salmonella agona (strain SL483).